Reading from the N-terminus, the 414-residue chain is Probable acetyl-CoA acetyltransferase (414 aa).

Catalysis depends on Cys110, which acts as the Acyl-thioester intermediate. CoA-binding positions include Tyr205, 244 to 246, and Lys249; that span reads KVL. Tyr205 is a K(+) binding site. 2 residues coordinate K(+): Ala266 and Ala268. Ser269 lines the CoA pocket. Position 366 (Val366) interacts with K(+). Active-site proton acceptor residues include His370 and Cys400.

This sequence belongs to the thiolase-like superfamily. Thiolase family.

The catalysed reaction is 2 acetyl-CoA = acetoacetyl-CoA + CoA. This Dictyostelium discoideum (Social amoeba) protein is Probable acetyl-CoA acetyltransferase.